Here is a 314-residue protein sequence, read N- to C-terminus: Fumarylacetoacetate hydrolase domain-containing protein 2 (314 aa).

The a divalent metal cation site is built by E159, E161, and D190. K203 is subject to N6-acetyllysine; alternate. N6-succinyllysine; alternate is present on K203. K234 is modified (N6-acetyllysine).

Belongs to the FAH family. It depends on Ca(2+) as a cofactor. Requires Mg(2+) as cofactor.

Functionally, may have hydrolase activity. This chain is Fumarylacetoacetate hydrolase domain-containing protein 2 (FAHD2), found in Pongo abelii (Sumatran orangutan).